Reading from the N-terminus, the 164-residue chain is HTH-type transcriptional regulator IscR (164 aa).

Residues 2-131 (RLTSKGRYAV…NNITLDELVN (130 aa)) form the HTH rrf2-type domain. Residues 28–51 (LADISERQGISLSYLEQLFSRLRK) constitute a DNA-binding region (H-T-H motif). [2Fe-2S] cluster-binding residues include cysteine 92, cysteine 98, and cysteine 104.

Requires [2Fe-2S] cluster as cofactor.

In terms of biological role, regulates the transcription of several operons and genes involved in the biogenesis of Fe-S clusters and Fe-S-containing proteins. The chain is HTH-type transcriptional regulator IscR from Pectobacterium atrosepticum (strain SCRI 1043 / ATCC BAA-672) (Erwinia carotovora subsp. atroseptica).